The following is a 137-amino-acid chain: Oleosin Ara h 11.0102 (137 aa).

Ala-2 is subject to N-acetylalanine; alternate. The next 2 helical transmembrane spans lie at 27–47 (AVVA…ATVI) and 55–75 (LFVI…LLGL).

This sequence belongs to the oleosin family. In terms of tissue distribution, expressed in seeds (at protein level).

The protein localises to the lipid droplet. It is found in the membrane. In terms of biological role, may have a structural role to stabilize the lipid body during desiccation of the seed by preventing coalescence of the oil. Probably interacts with both lipid and phospholipid moieties of lipid bodies. May also provide recognition signals for specific lipase anchorage in lipolysis during seedling growth. This Arachis hypogaea (Peanut) protein is Oleosin Ara h 11.0102.